We begin with the raw amino-acid sequence, 368 residues long: Phospho-N-acetylmuramoyl-pentapeptide-transferase (368 aa).

10 helical membrane passes run 32 to 52 (TGGAMVTGALFVFLFGPWIID), 79 to 99 (TPTMGGLMILSGLVVSTVLWA), 102 to 122 (LNPYVWIVLAVTLGFGFIGFY), 140 to 160 (TRLLLELLIALAACYALIRLG), 176 to 196 (VVVDLGWFFLAFGAFIIVGAG), 207 to 227 (GLAIVPVMIAAASFGMIAYLA), 247 to 267 (LAVLCGAVLGAGLGFLWFNAP), 271 to 291 (IFMGDTGSLALGGMLGSIAVA), 296 to 316 (IVLAVIGGLFVLEAVSVIVQV), and 345 to 365 (QIVIRFWIISVMLALAGLSTL).

This sequence belongs to the glycosyltransferase 4 family. MraY subfamily. The cofactor is Mg(2+).

Its subcellular location is the cell inner membrane. The catalysed reaction is UDP-N-acetyl-alpha-D-muramoyl-L-alanyl-gamma-D-glutamyl-meso-2,6-diaminopimeloyl-D-alanyl-D-alanine + di-trans,octa-cis-undecaprenyl phosphate = di-trans,octa-cis-undecaprenyl diphospho-N-acetyl-alpha-D-muramoyl-L-alanyl-D-glutamyl-meso-2,6-diaminopimeloyl-D-alanyl-D-alanine + UMP. The protein operates within cell wall biogenesis; peptidoglycan biosynthesis. Catalyzes the initial step of the lipid cycle reactions in the biosynthesis of the cell wall peptidoglycan: transfers peptidoglycan precursor phospho-MurNAc-pentapeptide from UDP-MurNAc-pentapeptide onto the lipid carrier undecaprenyl phosphate, yielding undecaprenyl-pyrophosphoryl-MurNAc-pentapeptide, known as lipid I. In Nitrobacter hamburgensis (strain DSM 10229 / NCIMB 13809 / X14), this protein is Phospho-N-acetylmuramoyl-pentapeptide-transferase.